Consider the following 596-residue polypeptide: Elongation factor 4 (596 aa).

The tr-type G domain maps to 2–184 (KNIRNFAIIA…SIVKYIPPPE (183 aa)). Residues 14-19 (DHGKST) and 131-134 (NKID) contribute to the GTP site.

It belongs to the TRAFAC class translation factor GTPase superfamily. Classic translation factor GTPase family. LepA subfamily.

Its subcellular location is the cell inner membrane. It catalyses the reaction GTP + H2O = GDP + phosphate + H(+). Its function is as follows. Required for accurate and efficient protein synthesis under certain stress conditions. May act as a fidelity factor of the translation reaction, by catalyzing a one-codon backward translocation of tRNAs on improperly translocated ribosomes. Back-translocation proceeds from a post-translocation (POST) complex to a pre-translocation (PRE) complex, thus giving elongation factor G a second chance to translocate the tRNAs correctly. Binds to ribosomes in a GTP-dependent manner. The polypeptide is Elongation factor 4 (Neorickettsia sennetsu (strain ATCC VR-367 / Miyayama) (Ehrlichia sennetsu)).